We begin with the raw amino-acid sequence, 1088 residues long: DNA-directed RNA polymerase subunit beta (1088 aa).

The protein belongs to the RNA polymerase beta chain family. As to quaternary structure, in plastids the minimal PEP RNA polymerase catalytic core is composed of four subunits: alpha, beta, beta', and beta''. When a (nuclear-encoded) sigma factor is associated with the core the holoenzyme is formed, which can initiate transcription.

It is found in the plastid. Its subcellular location is the chloroplast. The catalysed reaction is RNA(n) + a ribonucleoside 5'-triphosphate = RNA(n+1) + diphosphate. Its function is as follows. DNA-dependent RNA polymerase catalyzes the transcription of DNA into RNA using the four ribonucleoside triphosphates as substrates. The polypeptide is DNA-directed RNA polymerase subunit beta (Chlorokybus atmophyticus (Soil alga)).